The following is a 590-amino-acid chain: Probable serine/threonine-protein phosphatase PP2A regulatory subunit (590 aa).

HEAT repeat units lie at residues 37-73 (LSTI…VLAE), 74-111 (QLGN…DKAV), 113-150 (SLRK…TSAC), 151-188 (GLFS…RAAA), 189-227 (AKLG…LLTV), 228-266 (ESAI…YMVA), 267-305 (EKLI…CAAT), 306-344 (QRLQ…QLVK), 349-387 (GVIM…LNII), 388-426 (SSLD…LAIV), 427-465 (QFMP…EAST), 466-504 (LIMK…MTCL), 505-543 (FCLN…FNAA), and 544-582 (KSLK…YFSE).

Belongs to the phosphatase 2A regulatory subunit A family. As to quaternary structure, part of a complex consisting of a common heterodimeric core enzyme, composed of catalytic subunit let-92 and constant regulatory subunit paa-1, that associates with a variety of regulatory subunits which confer distinct properties to the holoenzyme. Interacts with rsa-1.

The protein resides in the cytoplasm. Its subcellular location is the cytoskeleton. The protein localises to the microtubule organizing center. It is found in the centrosome. It localises to the spindle. Its function is as follows. Acts as a scaffolding protein for phosphatase let-92 and its regulatory subunits. Probably together with let-92 and regulatory subunit sur-6, regulates centriole duplication, microtubule outgrowth and mitotic spindle stability during early embryonic cell division by preventing the degradation of sas-5 and kinase zyg-1. During vulva development, may play a role with phosphatase let-92 and regulatory subunit sur-6 in the induction of vulva cell precursors by positively regulating let-60/Ras-MAP kinase signaling, probably by promoting lin-45 activation. Plays a positive role in axon guidance probably by inhibiting phosphatase let-92. This is Probable serine/threonine-protein phosphatase PP2A regulatory subunit (paa-1) from Caenorhabditis elegans.